The following is a 246-amino-acid chain: 1-(5-phosphoribosyl)-5-[(5-phosphoribosylamino)methylideneamino] imidazole-4-carboxamide isomerase (246 aa).

Catalysis depends on aspartate 7, which acts as the Proton acceptor. Aspartate 129 functions as the Proton donor in the catalytic mechanism.

The protein belongs to the HisA/HisF family.

The protein localises to the cytoplasm. It carries out the reaction 1-(5-phospho-beta-D-ribosyl)-5-[(5-phospho-beta-D-ribosylamino)methylideneamino]imidazole-4-carboxamide = 5-[(5-phospho-1-deoxy-D-ribulos-1-ylimino)methylamino]-1-(5-phospho-beta-D-ribosyl)imidazole-4-carboxamide. It participates in amino-acid biosynthesis; L-histidine biosynthesis; L-histidine from 5-phospho-alpha-D-ribose 1-diphosphate: step 4/9. This Shewanella sediminis (strain HAW-EB3) protein is 1-(5-phosphoribosyl)-5-[(5-phosphoribosylamino)methylideneamino] imidazole-4-carboxamide isomerase.